A 241-amino-acid chain; its full sequence is 7-cyano-7-deazaguanine synthase (241 aa).

An ATP-binding site is contributed by 9 to 19; sequence LSGGLDSSTVL. Positions 189, 197, 200, and 203 each coordinate Zn(2+).

The protein belongs to the QueC family. The cofactor is Zn(2+).

It carries out the reaction 7-carboxy-7-deazaguanine + NH4(+) + ATP = 7-cyano-7-deazaguanine + ADP + phosphate + H2O + H(+). The protein operates within purine metabolism; 7-cyano-7-deazaguanine biosynthesis. Its function is as follows. Catalyzes the ATP-dependent conversion of 7-carboxy-7-deazaguanine (CDG) to 7-cyano-7-deazaguanine (preQ(0)). The sequence is that of 7-cyano-7-deazaguanine synthase from Thermoplasma volcanium (strain ATCC 51530 / DSM 4299 / JCM 9571 / NBRC 15438 / GSS1).